The primary structure comprises 477 residues: Glutamyl-tRNA reductase (477 aa).

Substrate contacts are provided by residues 49-52 (TCNR), S109, 114-116 (EGQ), and Q120. Catalysis depends on C50, which acts as the Nucleophile. 221-226 (GAGSMS) contributes to the NADP(+) binding site.

This sequence belongs to the glutamyl-tRNA reductase family. Homodimer.

It carries out the reaction (S)-4-amino-5-oxopentanoate + tRNA(Glu) + NADP(+) = L-glutamyl-tRNA(Glu) + NADPH + H(+). It functions in the pathway porphyrin-containing compound metabolism; protoporphyrin-IX biosynthesis; 5-aminolevulinate from L-glutamyl-tRNA(Glu): step 1/2. Catalyzes the NADPH-dependent reduction of glutamyl-tRNA(Glu) to glutamate 1-semialdehyde (GSA). This Thermobifida fusca (strain YX) protein is Glutamyl-tRNA reductase.